The primary structure comprises 264 residues: Virulence plasmid protein pGP3-D (264 aa).

This Chlamydia trachomatis serovar L2 (strain ATCC VR-902B / DSM 19102 / 434/Bu) protein is Virulence plasmid protein pGP3-D.